Here is a 727-residue protein sequence, read N- to C-terminus: MPITHEQPNGFHSKQLNGSGIAKAKAMPYPSDLLSHFVKQHLELESYKNGQEIEIDGYSLSISAVSAAARYNAPVILRDSSTIRDRLEKARSVIVEKIEGSKSVYGVSTGFGGSADTRTSNTLALGNALLQHQHSGVLPSTTNTLSVLPLLDPIASTSMPESWVRGAILIRINSLIRGHSGVRWELIAKMVELLQANITPLVPLRGSISASGDLSPLSYVAGTLMGNPSIRVFDGPAAFGARQIVSSVKALEEHNITPISLLAKEHLGILNGTAFSASVASLVLSDVTHLAMLAQVCTAMGTEVLLGERMNYAPFIHAVARPHPGQTEAARTIWDLLSGSKLAHGHEEEVTIDQDQGELRQDRYPLRTAPQFLGPQIEDILSALNTVTLECNSTTDNPLIDGETGDIHHGGNFQAMSVSNAMEKTRLSLHHIGKLLFAQCAELVHPDMNRGLPPSLAATDPSINYHGKGIDIGIAAYVSELGYLANPVSTHIQSAELHNQAVNSLALISARATINSLEVLSLLTSSYLYMLCQAYDLRALQADFRQGLAEIVQEELRAHFSAHIESLDESPLFDKVISSMYKELNHTTTMDAVPRMVKVAGASTSLLVDFFMANQTSDAMSVAALTALPKFRETVALRAAAKLVALREEYLLGARGPAPASAWLGRTRPIYEFIRVTLGIRMHGTENLGVFQQGLGVQDVTIGQNVSLIHEAIRDGKMRGVVVGLFA.

The active-site Proton donor/acceptor is Tyr105. Residues 210 to 212 (ASG) constitute a cross-link (5-imidazolinone (Ala-Gly)). Ser211 bears the 2,3-didehydroalanine (Ser) mark. Positions 271, 361, 367, 397, 468, 496, and 499 each coordinate (E)-cinnamate.

Belongs to the PAL/histidase family. Post-translationally, contains an active site 4-methylidene-imidazol-5-one (MIO), which is formed autocatalytically by cyclization and dehydration of residues Ala-Ser-Gly.

It catalyses the reaction L-phenylalanine = (E)-cinnamate + NH4(+). Its pathway is mycotoxin biosynthesis. In terms of biological role, phenylalanine ammonia-lyase; part of the gene cluster that mediates the biosynthesis of strobilurin A, an antifungal polyketide that contains a key beta-methoxyacrylate toxophore that targets the complex III of the mitochondrial electron transport chain. Strobilurin biosynthesis begins with construction of benzoyl CoA by step-wise elimination of ammonia from phenylalanine by the phenylalanine ammonia-lyase str11, oxygenation by str8 and retro-Claisen reaction to form benzoic acid, which is activated to its CoA thiolester benzoyl CoA by the dedicated CoA ligase str10. Benzoyl CoA forms the starter unit for the highly reducing polyketide synthase stpks1 that produces the polyketide prestrobilutin A. The FAD-dependent oxygenase str9 then catalyzes the key oxidative rearrangement responsible for the creation of the beta-methoxyacrylate toxophore. Str9 performs epoxidation of the 2,3 olefin of prestrobilutin A, followed by Meinwald rearrangement to furnish the aldehyde intermediate. Rapid enolization of the aldehyde intermediate would give the beta-methoxyacrylate skeleton and methylations catalyzed by str2 and str3 complete the synthesis and lead to the production of strobilurin A. The short-chain dehydrogenase stl2 and the dehydrogenase str4 play a role in the shunt pathway leading to the production of bolineol. The cluster encodes no obvious halogenase gene that could be involved in production of strobilurin B, nor any obvious dimethylallyl-transferase that could be involved in the production of strobilurin G. It is possible that unknown proteins encoded in, or near, the cluster (such as str1 or stl1) may form new classes of halogenases or dimethylally-transferases, or that the responsible genes are located elsewhere on the genome. Similarly, proteins encoded by str5/str6 hydrolases appear to have no chemical role in the biosynthesis of strobilurin A. Finally, no obvious self-resistance gene is found within the cluster. This chain is Phenylalanine ammonia-lyase str11, found in Strobilurus tenacellus.